Here is a 447-residue protein sequence, read N- to C-terminus: Zinc finger protein ZIC 1 (447 aa).

The C2H2-type 1; atypical zinc-finger motif lies at 225–260; sequence LICKWIEPEQLANPKKSCNKTFSTMHELVTHVTVEH. Residues 269–296 form a C2H2-type 2; atypical zinc finger; it reads HICFWEECPREGKPFKAKYKLVNHIRVH. 3 C2H2-type zinc fingers span residues 302–326, 332–356, and 362–384; these read FPCP…KRTH, FKCE…MHVH, and YLCK…MKVH. The segment at 375-434 is disordered; it reads SSLRKHMKVHESSSQGSQPSPAASSGYESSTPPTIVSPTTDNPTTSSMSPSSSAVHHTAG. Over residues 386-427 the composition is skewed to low complexity; it reads SSSQGSQPSPAASSGYESSTPPTIVSPTTDNPTTSSMSPSSS.

The protein belongs to the GLI C2H2-type zinc-finger protein family. In terms of assembly, interacts (via the C2H2-type domains 3, 4 and 5) with MDFIC (via the C2H2-type domains 3, 4 and 5). Interacts with GLI1; the interaction enhances transcription activation. Interacts with GLI2. Interacts with GLI3; the interaction enhances transcription activation. As to expression, expressed in osteoblasts (at protein level). Expressed in the CNS. A high level expression is seen in the cerebellum, while a low level expression is seen in the olfactory bulb, diencephalon, and brainstem. Expressed in lumbar spine and iliac crest.

The protein resides in the nucleus. Its subcellular location is the cytoplasm. In terms of biological role, acts as a transcriptional activator. Involved in neurogenesis. Plays important roles in the early stage of organogenesis of the CNS, as well as during dorsal spinal cord development and maturation of the cerebellum. Involved in the spatial distribution of mossy fiber (MF) neurons within the pontine gray nucleus (PGN). Plays a role in the regulation of MF axon pathway choice. Promotes MF migration towards ipsilaterally-located cerebellar territories. May have a role in shear flow mechanotransduction in osteocytes. Retains nuclear GLI1 and GLI3 in the cytoplasm. Binds to the minimal GLI-consensus sequence 5'-TGGGTGGTC-3'. The chain is Zinc finger protein ZIC 1 (Zic1) from Mus musculus (Mouse).